Here is a 485-residue protein sequence, read N- to C-terminus: Adenosylhomocysteinase (485 aa).

Residues T64, D139, and E205 each contribute to the substrate site. NAD(+) is bound at residue 206–208; the sequence is TTT. Residues K235 and D239 each contribute to the substrate site. Residues N240, 269–274, E292, N327, 348–350, and N397 each bind NAD(+); these read GYGDVG and IGH.

The protein belongs to the adenosylhomocysteinase family. In terms of assembly, homotetramer. Requires NAD(+) as cofactor. As to expression, mainly in floral buds and stems.

The enzyme catalyses S-adenosyl-L-homocysteine + H2O = L-homocysteine + adenosine. Its pathway is amino-acid biosynthesis; L-homocysteine biosynthesis; L-homocysteine from S-adenosyl-L-homocysteine: step 1/1. Functionally, adenosylhomocysteine is a competitive inhibitor of S-adenosyl-L-methionine-dependent methyl transferase reactions; therefore adenosylhomocysteinase may play a key role in the control of methylations via regulation of the intracellular concentration of adenosylhomocysteine. The sequence is that of Adenosylhomocysteinase (SAHH) from Petroselinum crispum (Parsley).